Here is a 212-residue protein sequence, read N- to C-terminus: MERLLVLARHGQSEWNLKKLFTGWRDPELTELGIDEARRAGRWLKSQGTQFDVAFTSNLRRAQNTCALILEEMGQAGLETIRNEALNERDYGDLSGLNKDDARERWGDAQVHEWRRSYDVPPPGGESLKDTAARVLPYYIQTILPRVMSGERVLVAAHGNSLRALVMVLDGMTTKTIASLEIATGIPLVYRLKADTTVESKTVLDKDIDQDN.

Substrate-binding positions include 9-16 (RHGQSEWN), 22-23 (TG), arginine 61, 88-91 (ERDY), lysine 99, 115-116 (RR), and 159-160 (GN). The active-site Tele-phosphohistidine intermediate is histidine 10. Glutamate 88 (proton donor/acceptor) is an active-site residue.

This sequence belongs to the phosphoglycerate mutase family. BPG-dependent PGAM subfamily. In terms of assembly, homodimer.

It carries out the reaction (2R)-2-phosphoglycerate = (2R)-3-phosphoglycerate. Its pathway is carbohydrate degradation; glycolysis; pyruvate from D-glyceraldehyde 3-phosphate: step 3/5. Functionally, catalyzes the interconversion of 2-phosphoglycerate and 3-phosphoglycerate. The sequence is that of 2,3-bisphosphoglycerate-dependent phosphoglycerate mutase from Methylorubrum populi (strain ATCC BAA-705 / NCIMB 13946 / BJ001) (Methylobacterium populi).